Here is a 230-residue protein sequence, read N- to C-terminus: Large ribosomal subunit protein uL1 (230 aa).

The protein belongs to the universal ribosomal protein uL1 family. In terms of assembly, part of the 50S ribosomal subunit.

Functionally, binds directly to 23S rRNA. The L1 stalk is quite mobile in the ribosome, and is involved in E site tRNA release. Its function is as follows. Protein L1 is also a translational repressor protein, it controls the translation of the L11 operon by binding to its mRNA. This is Large ribosomal subunit protein uL1 from Lactobacillus acidophilus (strain ATCC 700396 / NCK56 / N2 / NCFM).